The sequence spans 273 residues: HMP-PP phosphatase (273 aa).

Residue Asp-8 is the Nucleophile of the active site. Mg(2+)-binding residues include Asp-8, Asp-10, and Asp-212.

This sequence belongs to the HAD-like hydrolase superfamily. Cof family. Mg(2+) serves as cofactor.

It carries out the reaction 4-amino-2-methyl-5-(diphosphooxymethyl)pyrimidine + H2O = 4-amino-2-methyl-5-(phosphooxymethyl)pyrimidine + phosphate + H(+). Catalyzes the hydrolysis of 4-amino-2-methyl-5-hydroxymethylpyrimidine pyrophosphate (HMP-PP) to 4-amino-2-methyl-5-hydroxymethylpyrimidine phosphate (HMP-P). This Yersinia pseudotuberculosis serotype IB (strain PB1/+) protein is HMP-PP phosphatase.